We begin with the raw amino-acid sequence, 94 residues long: Prepro-gonadotropin-releasing hormone-like protein (94 aa).

Positions Met-1–Gly-21 are cleaved as a signal peptide.

The protein resides in the secreted. In terms of biological role, neuropeptide involved in reproduction. May be an important hormone in the regulation of gonadal maturation. The polypeptide is Prepro-gonadotropin-releasing hormone-like protein (Ruditapes philippinarum (Japanese carpet shell)).